The sequence spans 132 residues: uncharacterized protein (132 aa).

The interval 1 to 34 is disordered; that stretch reads MTAGAGGSPPTRRCPATEDRAPATVATPSSADPT.

It to M.tuberculosis Rv2656c.

This is an uncharacterized protein from Mycobacterium tuberculosis (strain CDC 1551 / Oshkosh).